The sequence spans 1073 residues: PX domain-containing protein LEC1 (1073 aa).

Positions 218–228 (CTESVDNDKSS) are enriched in basic and acidic residues. The tract at residues 218-240 (CTESVDNDKSSKSTPTSSPKSHA) is disordered. Residues 229-238 (KSTPTSSPKS) are compositionally biased toward low complexity. The 234-residue stretch at 273-506 (LFSKLSLGVP…RFFLSGPNLD (234 aa)) folds into the PX domain. A phosphoserine mark is found at serine 310 and serine 451. Residues 431–456 (IKEEDNIDEDEYEEEGEGEESDFDEY) are disordered. A compositionally biased stretch (acidic residues) spans 432 to 453 (KEEDNIDEDEYEEEGEGEESDF).

It localises to the endoplasmic reticulum membrane. The protein localises to the lipid droplet. In terms of biological role, phosphoinositide-binding protein that plays a role in regulation of ergosterol distribution in the cell. Facilitates ergosterol transport between plasma membrane and lipid droplets. The protein is PX domain-containing protein LEC1 of Saccharomyces cerevisiae (strain ATCC 204508 / S288c) (Baker's yeast).